The sequence spans 570 residues: Acetolactate synthase (570 aa).

E60 contacts thiamine diphosphate. Residues Q162, 266 to 287 (FRNQ…IGYD), and 308 to 327 (DEII…LIGD) each bind FAD. Residues 399–479 (SHAIWMSRYF…IVHIVWNDST (81 aa)) form a thiamine pyrophosphate binding region. D450 provides a ligand contact to Mg(2+).

It belongs to the TPP enzyme family. Mg(2+) is required as a cofactor. Thiamine diphosphate serves as cofactor.

It carries out the reaction 2 pyruvate + H(+) = (2S)-2-acetolactate + CO2. It participates in polyol metabolism; (R,R)-butane-2,3-diol biosynthesis; (R,R)-butane-2,3-diol from pyruvate: step 1/3. The polypeptide is Acetolactate synthase (alsS) (Bacillus subtilis (strain 168)).